A 245-amino-acid polypeptide reads, in one-letter code: Fibroblast growth factor-binding protein 3 (245 aa).

Positions 1–28 (MSPPRPRASLSPLTLLLLLGGCLLSAAG) are cleaved as a signal peptide. The interval 33–52 (AAGREVTRASRPTVGSSGRF) is disordered. Disulfide bonds link Cys60–Cys81 and Cys91–Cys125. The segment at 136–216 (CARKTAGSDL…PAAAGFQPNG (81 aa)) is disordered. Residues 170-180 (RSRQSVRSPSS) are compositionally biased toward low complexity. Cys228 and Cys236 are joined by a disulfide.

This sequence belongs to the fibroblast growth factor-binding protein family. In terms of assembly, interacts with FGF2. In the adult, highly expressed in brain with lower levels in ovary. In the embryo, highest levels are found in the brain and spinal cord at 14 dpc and expression is almost completely restricted to the brain by 18 dpc. In the adult and postnatal brain, highly expressed in the orbitofrontal cortex where it is concentrated primarily in differentiated neurons.

It localises to the secreted. Functionally, heparin-binding protein which binds to FGF2, prevents binding of FGF2 to heparin and probably inhibits immobilization of FGF2 on extracellular matrix glycosaminoglycans, allowing its release and subsequent activation of FGFR signaling which leads to increased vascular permeability. The polypeptide is Fibroblast growth factor-binding protein 3 (Fgfbp3) (Mus musculus (Mouse)).